The sequence spans 462 residues: S-alkyl-thiohydroximate lyase SUR1 (462 aa).

Belongs to the class-I pyridoxal-phosphate-dependent aminotransferase family. Pyridoxal 5'-phosphate is required as a cofactor.

In terms of biological role, C-S lyase involved in glucosinolate biosynthesis. Converts S-(alkylacetohydroximoyl)-L-cysteine to thiohydroximate. Functions in auxin homeostasis. Probably required for glucosinolate activation in response to pathogens. The polypeptide is S-alkyl-thiohydroximate lyase SUR1 (SUR1) (Arabidopsis thaliana (Mouse-ear cress)).